Consider the following 120-residue polypeptide: Large ribosomal subunit protein uL18c (120 aa).

The protein belongs to the universal ribosomal protein uL18 family. In terms of assembly, part of the 50S ribosomal subunit; contacts the 5S rRNA.

It localises to the plastid. The protein resides in the chloroplast. Its function is as follows. Binds 5S rRNA, forms part of the central protuberance of the 50S subunit. The chain is Large ribosomal subunit protein uL18c (rpl18) from Porphyra purpurea (Red seaweed).